The chain runs to 200 residues: Dephospho-CoA kinase (200 aa).

A DPCK domain is found at V3–S200. G11–S16 contributes to the ATP binding site.

It belongs to the CoaE family.

It localises to the cytoplasm. The enzyme catalyses 3'-dephospho-CoA + ATP = ADP + CoA + H(+). Its pathway is cofactor biosynthesis; coenzyme A biosynthesis; CoA from (R)-pantothenate: step 5/5. Its function is as follows. Catalyzes the phosphorylation of the 3'-hydroxyl group of dephosphocoenzyme A to form coenzyme A. This is Dephospho-CoA kinase from Nitrosospira multiformis (strain ATCC 25196 / NCIMB 11849 / C 71).